Reading from the N-terminus, the 158-residue chain is Low molecular weight phosphotyrosine protein phosphatase (158 aa).

At alanine 2 the chain carries N-acetylalanine. Cysteine 13 (nucleophile) is an active-site residue. Residue arginine 19 is part of the active site. Aspartate 130 acts as the Proton donor in catalysis. Phosphotyrosine occurs at positions 132 and 133.

It belongs to the low molecular weight phosphotyrosine protein phosphatase family. In terms of assembly, interacts with EPHA2; dephosphorylates EPHA2. Interacts with EPHB1. Interacts with the SH3 domain of SPTAN1. Post-translationally, phosphorylated by LCK. Phosphorylation at Tyr-132 increases its phosphatase activity.

Its subcellular location is the cytoplasm. The catalysed reaction is O-phospho-L-tyrosyl-[protein] + H2O = L-tyrosyl-[protein] + phosphate. It catalyses the reaction a phosphate monoester + H2O = an alcohol + phosphate. With respect to regulation, inhibited by sulfhydryl reagents. In terms of biological role, acts on tyrosine phosphorylated proteins, low-MW aryl phosphates and natural and synthetic acyl phosphates with differences in substrate specificity between isoform 1 and isoform 2. The sequence is that of Low molecular weight phosphotyrosine protein phosphatase (ACP1) from Sus scrofa (Pig).